The following is a 250-amino-acid chain: Ubiquinone/menaquinone biosynthesis C-methyltransferase UbiE (250 aa).

Residues Thr73, Asp94, 122 to 123 (NA), and Ser139 each bind S-adenosyl-L-methionine.

The protein belongs to the class I-like SAM-binding methyltransferase superfamily. MenG/UbiE family.

It catalyses the reaction a 2-demethylmenaquinol + S-adenosyl-L-methionine = a menaquinol + S-adenosyl-L-homocysteine + H(+). The catalysed reaction is a 2-methoxy-6-(all-trans-polyprenyl)benzene-1,4-diol + S-adenosyl-L-methionine = a 5-methoxy-2-methyl-3-(all-trans-polyprenyl)benzene-1,4-diol + S-adenosyl-L-homocysteine + H(+). It functions in the pathway quinol/quinone metabolism; menaquinone biosynthesis; menaquinol from 1,4-dihydroxy-2-naphthoate: step 2/2. It participates in cofactor biosynthesis; ubiquinone biosynthesis. Its function is as follows. Methyltransferase required for the conversion of demethylmenaquinol (DMKH2) to menaquinol (MKH2) and the conversion of 2-polyprenyl-6-methoxy-1,4-benzoquinol (DDMQH2) to 2-polyprenyl-3-methyl-6-methoxy-1,4-benzoquinol (DMQH2). This is Ubiquinone/menaquinone biosynthesis C-methyltransferase UbiE from Francisella tularensis subsp. novicida (strain U112).